The chain runs to 265 residues: ATP synthase subunit a (265 aa).

5 consecutive transmembrane segments (helical) span residues 25-45 (FWAV…LFLW), 88-108 (IAPL…MDLI), 142-162 (DLNT…IYSI), 207-227 (LFGN…IGFW), and 233-253 (FAWA…FMML).

Belongs to the ATPase A chain family. In terms of assembly, F-type ATPases have 2 components, CF(1) - the catalytic core - and CF(0) - the membrane proton channel. CF(1) has five subunits: alpha(3), beta(3), gamma(1), delta(1), epsilon(1). CF(0) has three main subunits: a(1), b(2) and c(9-12). The alpha and beta chains form an alternating ring which encloses part of the gamma chain. CF(1) is attached to CF(0) by a central stalk formed by the gamma and epsilon chains, while a peripheral stalk is formed by the delta and b chains.

The protein localises to the cell inner membrane. In terms of biological role, key component of the proton channel; it plays a direct role in the translocation of protons across the membrane. This chain is ATP synthase subunit a, found in Idiomarina loihiensis (strain ATCC BAA-735 / DSM 15497 / L2-TR).